The sequence spans 470 residues: MNPNQKIITIGSVSLGLVVLNILLHIVSITITVLVLPGNGNNGSCNETVIREYNETVRIEKVTQWHNTNVIEYIERPESDHFMNNTEPLCDVKGFAPFSKDNGIRIGSRGHVFVIREPFVSCSPTECRTFFLTQGSLLNDKHSNGTVKDRSPYRTLMSVEIGQSPNVYQARFEAVAWSATACHDGKKWMTIGVTGPDAKAVAVVHYGGIPTDVIQSWAGDISRTQESSCTCIQGECYWVMTDGPANRQAQYRAFKAKQGKIIGQTEISFNGGHIEECSCYPNEGKVECVCRDNWTGTNRPVLVISSDLSYRVGYLCAGLPSDTPRGEDSQFTGSCTSPMGNQGYGVKGFGFRQGNDVWMGRTISRTSRSGFEVLKVRNGWIQNSKDQIKRQVVVDNLNWSGYSGSFTLPVELTKRSCLVPCFWVEMIRGKPEETTIWTSSSSIVMCGVDHEIADWSWHDGAILPFDIDKM.

Residues Met-1–Ser-14 are Intravirion-facing. An involved in apical transport and lipid raft association region spans residues Gly-11–Thr-32. Residues Leu-15–Val-35 form a helical membrane-spanning segment. Residues Thr-32–Thr-86 form a hypervariable stalk region region. Residues Leu-36 to Met-470 lie on the Virion surface side of the membrane. 4 N-linked (GlcNAc...) asparagine; by host glycosylation sites follow: Asn-42, Asn-46, Asn-54, and Asn-84. The interval Leu-89–Met-470 is head of neuraminidase. Cystine bridges form between Cys-90-Cys-417, Cys-122-Cys-127, Cys-182-Cys-229, Cys-231-Cys-236, Cys-277-Cys-290, Cys-279-Cys-288, Cys-316-Cys-335, and Cys-421-Cys-446. Arg-116 serves as a coordination point for substrate. Asn-144 is a glycosylation site (N-linked (GlcNAc...) asparagine; by host). Asp-149 (proton donor/acceptor) is an active-site residue. Position 150 (Arg-150) interacts with substrate. Position 275–276 (Glu-275–Glu-276) interacts with substrate. Arg-291 lines the substrate pocket. Ca(2+) is bound at residue Asp-292. The N-linked (GlcNAc...) asparagine; by host glycan is linked to Asn-293. 2 residues coordinate Ca(2+): Gly-296 and Asp-322. Residue Arg-368 coordinates substrate. Asn-398 carries an N-linked (GlcNAc...) asparagine; by host glycan. Tyr-402 (nucleophile) is an active-site residue.

This sequence belongs to the glycosyl hydrolase 34 family. As to quaternary structure, homotetramer. Requires Ca(2+) as cofactor. In terms of processing, N-glycosylated.

The protein resides in the virion membrane. It is found in the host apical cell membrane. The enzyme catalyses Hydrolysis of alpha-(2-&gt;3)-, alpha-(2-&gt;6)-, alpha-(2-&gt;8)- glycosidic linkages of terminal sialic acid residues in oligosaccharides, glycoproteins, glycolipids, colominic acid and synthetic substrates.. Its activity is regulated as follows. Inhibited by the neuraminidase inhibitors zanamivir (Relenza) and oseltamivir (Tamiflu). These drugs interfere with the release of progeny virus from infected cells and are effective against all influenza strains. Resistance to neuraminidase inhibitors is quite rare. Functionally, catalyzes the removal of terminal sialic acid residues from viral and cellular glycoconjugates. Cleaves off the terminal sialic acids on the glycosylated HA during virus budding to facilitate virus release. Additionally helps virus spread through the circulation by further removing sialic acids from the cell surface. These cleavages prevent self-aggregation and ensure the efficient spread of the progeny virus from cell to cell. Otherwise, infection would be limited to one round of replication. Described as a receptor-destroying enzyme because it cleaves a terminal sialic acid from the cellular receptors. May facilitate viral invasion of the upper airways by cleaving the sialic acid moieties on the mucin of the airway epithelial cells. Likely to plays a role in the budding process through its association with lipid rafts during intracellular transport. May additionally display a raft-association independent effect on budding. Plays a role in the determination of host range restriction on replication and virulence. Sialidase activity in late endosome/lysosome traffic seems to enhance virus replication. The polypeptide is Neuraminidase (Aves (Horse)).